A 121-amino-acid polypeptide reads, in one-letter code: ATP synthase epsilon chain (121 aa).

This sequence belongs to the ATPase epsilon chain family. F-type ATPases have 2 components, CF(1) - the catalytic core - and CF(0) - the membrane proton channel. CF(1) has five subunits: alpha(3), beta(3), gamma(1), delta(1), epsilon(1). CF(0) has three main subunits: a, b and c.

The protein localises to the cell membrane. In terms of biological role, produces ATP from ADP in the presence of a proton gradient across the membrane. The chain is ATP synthase epsilon chain from Mycobacterium sp. (strain JLS).